An 88-amino-acid chain; its full sequence is Small ribosomal subunit protein uS15c (88 aa).

Belongs to the universal ribosomal protein uS15 family. Part of the 30S ribosomal subunit.

Its subcellular location is the plastid. The protein localises to the chloroplast. The sequence is that of Small ribosomal subunit protein uS15c (rps15) from Lepidium virginicum (Virginia pepperweed).